The primary structure comprises 136 residues: Probable intron-encoded DNA endonuclease 3 (136 aa).

Belongs to the LAGLIDADG endonuclease family.

Its subcellular location is the mitochondrion. Functionally, mitochondrial DNA endonuclease involved in intron homing. This is Probable intron-encoded DNA endonuclease 3 (hegI3) from Mycosarcoma maydis (Corn smut fungus).